The sequence spans 494 residues: Probable malate:quinone oxidoreductase 3 (494 aa).

The protein belongs to the MQO family. It depends on FAD as a cofactor.

The enzyme catalyses (S)-malate + a quinone = a quinol + oxaloacetate. It participates in carbohydrate metabolism; tricarboxylic acid cycle; oxaloacetate from (S)-malate (quinone route): step 1/1. In Staphylococcus epidermidis (strain ATCC 12228 / FDA PCI 1200), this protein is Probable malate:quinone oxidoreductase 3.